The chain runs to 317 residues: Ribose-phosphate pyrophosphokinase (317 aa).

ATP is bound by residues 41 to 43 (DME) and 100 to 101 (RQ). Mg(2+) contacts are provided by H134 and D174. The active site involves K197. Residues R199, D223, and 227–231 (DSGGT) each bind D-ribose 5-phosphate.

This sequence belongs to the ribose-phosphate pyrophosphokinase family. Class I subfamily. As to quaternary structure, homohexamer. The cofactor is Mg(2+).

It is found in the cytoplasm. It catalyses the reaction D-ribose 5-phosphate + ATP = 5-phospho-alpha-D-ribose 1-diphosphate + AMP + H(+). It functions in the pathway metabolic intermediate biosynthesis; 5-phospho-alpha-D-ribose 1-diphosphate biosynthesis; 5-phospho-alpha-D-ribose 1-diphosphate from D-ribose 5-phosphate (route I): step 1/1. Involved in the biosynthesis of the central metabolite phospho-alpha-D-ribosyl-1-pyrophosphate (PRPP) via the transfer of pyrophosphoryl group from ATP to 1-hydroxyl of ribose-5-phosphate (Rib-5-P). The sequence is that of Ribose-phosphate pyrophosphokinase from Bradyrhizobium diazoefficiens (strain JCM 10833 / BCRC 13528 / IAM 13628 / NBRC 14792 / USDA 110).